The following is a 423-amino-acid chain: Histidine--tRNA ligase (423 aa).

The protein belongs to the class-II aminoacyl-tRNA synthetase family. Homodimer.

Its subcellular location is the cytoplasm. It catalyses the reaction tRNA(His) + L-histidine + ATP = L-histidyl-tRNA(His) + AMP + diphosphate + H(+). This chain is Histidine--tRNA ligase, found in Moorella thermoacetica (strain ATCC 39073 / JCM 9320).